The chain runs to 495 residues: Ectonucleoside triphosphate diphosphohydrolase 8 (495 aa).

Over 1–8 (MGLTWKQR) the chain is Cytoplasmic. The chain crosses the membrane as a helical span at residues 9–29 (VFTALLGAAAVSGLTALLLVL). Residues 30 to 466 (VGTMNVLLPP…PAQGWAQSFG (437 aa)) are Extracellular-facing. An intrachain disulfide couples cysteine 78 to cysteine 102. Glutamate 168 acts as the Proton acceptor in catalysis. Cysteine 246 and cysteine 292 are oxidised to a cystine. Residues asparagine 303 and asparagine 324 are each glycosylated (N-linked (GlcNAc...) asparagine). Disulfide bonds link cysteine 328-cysteine 334 and cysteine 380-cysteine 403. Residues 467–487 (VWAAGVVFVVLTLAATLGAVA) traverse the membrane as a helical segment. The Cytoplasmic portion of the chain corresponds to 488 to 495 (VQVFWLQD).

Belongs to the GDA1/CD39 NTPase family. It depends on Ca(2+) as a cofactor. The cofactor is Mg(2+). Post-translationally, N-glycosylated.

It localises to the cell membrane. It catalyses the reaction a ribonucleoside 5'-triphosphate + 2 H2O = a ribonucleoside 5'-phosphate + 2 phosphate + 2 H(+). Canalicular ectonucleoside NTPDase responsible for the main hepatic NTPDase activity. Ectonucleoside NTPDases catalyze the hydrolysis of gamma- and beta-phosphate residues of nucleotides, playing a central role in concentration of extracellular nucleotides. Has activity toward ATP, ADP, UTP and UDP, but not toward AMP. This is Ectonucleoside triphosphate diphosphohydrolase 8 (ENTPD8) from Bos taurus (Bovine).